Consider the following 434-residue polypeptide: Histidinol dehydrogenase (434 aa).

Substrate contacts are provided by S242, Q264, and H267. The Zn(2+) site is built by Q264 and H267. Residues E332 and H333 each act as proton acceptor in the active site. Substrate-binding residues include H333, D366, E420, and H425. D366 contacts Zn(2+). H425 contacts Zn(2+).

The protein belongs to the histidinol dehydrogenase family. Zn(2+) serves as cofactor.

It catalyses the reaction L-histidinol + 2 NAD(+) + H2O = L-histidine + 2 NADH + 3 H(+). It participates in amino-acid biosynthesis; L-histidine biosynthesis; L-histidine from 5-phospho-alpha-D-ribose 1-diphosphate: step 9/9. Catalyzes the sequential NAD-dependent oxidations of L-histidinol to L-histidinaldehyde and then to L-histidine. In Oleidesulfovibrio alaskensis (strain ATCC BAA-1058 / DSM 17464 / G20) (Desulfovibrio alaskensis), this protein is Histidinol dehydrogenase.